Here is a 399-residue protein sequence, read N- to C-terminus: Enoyl-[acyl-carrier-protein] reductase [NADH] (399 aa).

Residues 48-53, 74-75, 111-112, and 139-140 each bind NAD(+); these read GASTGY, FE, DA, and LA. Residue tyrosine 225 coordinates substrate. The active-site Proton donor is the tyrosine 235. NAD(+) is bound by residues lysine 244 and 274-276; that span reads VVT.

The protein belongs to the TER reductase family. As to quaternary structure, monomer.

The enzyme catalyses a 2,3-saturated acyl-[ACP] + NAD(+) = a (2E)-enoyl-[ACP] + NADH + H(+). It participates in lipid metabolism; fatty acid biosynthesis. In terms of biological role, involved in the final reduction of the elongation cycle of fatty acid synthesis (FAS II). Catalyzes the reduction of a carbon-carbon double bond in an enoyl moiety that is covalently linked to an acyl carrier protein (ACP). This is Enoyl-[acyl-carrier-protein] reductase [NADH] from Erwinia tasmaniensis (strain DSM 17950 / CFBP 7177 / CIP 109463 / NCPPB 4357 / Et1/99).